Reading from the N-terminus, the 142-residue chain is Deoxyuridine 5'-triphosphate nucleotidohydrolase (142 aa).

This sequence belongs to the dUTPase family. It depends on Mg(2+) as a cofactor.

The catalysed reaction is dUTP + H2O = dUMP + diphosphate + H(+). In terms of biological role, this enzyme is involved in nucleotide metabolism: it produces dUMP, the immediate precursor of thymidine nucleotides and it decreases the intracellular concentration of dUTP so that uracil cannot be incorporated into DNA. This Swinepox virus (strain Kasza) (SWPV) protein is Deoxyuridine 5'-triphosphate nucleotidohydrolase (DUT).